The chain runs to 287 residues: Syntaxin-11 (287 aa).

Residues 41-71 adopt a coiled-coil conformation; sequence LESLYRDIRDIQDENQLLVADVKRLGKQNAR. Positions 204–266 constitute a t-SNARE coiled-coil homology domain; sequence LNEIESRHRE…GQAKAQVRKA (63 aa).

This sequence belongs to the syntaxin family. Interacts with the SNARE proteins SNAP-23 and VAMP.

The protein localises to the membrane. Its subcellular location is the golgi apparatus. It localises to the trans-Golgi network membrane. In terms of biological role, SNARE that acts to regulate protein transport between late endosomes and the trans-Golgi network. This chain is Syntaxin-11 (STX11), found in Homo sapiens (Human).